The primary structure comprises 592 residues: Serine/threonine-protein kinase ksg1 (592 aa).

Over residues 1–10 the composition is skewed to polar residues; it reads MRNTHNPNET. Residues 1 to 92 form a disordered region; that stretch reads MRNTHNPNET…NPSSGASTPN (92 aa). The span at 11 to 22 shows a compositional bias: acidic residues; that stretch reads EASEDAENDTQS. The segment covering 27–37 has biased composition (basic and acidic residues); sequence SFDHGSSEKLN. The segment covering 42–68 has biased composition (polar residues); sequence PKTQNSAIPQSNALNTTPNESTSQIDS. Phosphoserine occurs at positions 64 and 69. The span at 80–92 shows a compositional bias: polar residues; the sequence is STPNPSSGASTPN. Positions 99–366 constitute a Protein kinase domain; that stretch reads FKFGEILGEG…VDEIHQHPFF (268 aa). ATP-binding positions include 109-111 and Lys128; that span reads SYS. Residues 130–175 are PIF-pocket; the sequence is LDKRHIIKEKKEKYVNIEKEALCILSKHPGFIKLFYTFQDAHNLYF. ATP-binding positions include 178-180 and Glu184; that span reads SLA. Asp223 acts as the Proton acceptor in catalysis. ATP is bound by residues Glu227 and Asp241. Positions 461 to 572 constitute a PH domain; it reads ISKIGTLNVY…ELLDKASSIS (112 aa).

Belongs to the protein kinase superfamily. AGC Ser/Thr protein kinase family. PDPK1 subfamily.

The protein resides in the cytoplasm. The enzyme catalyses L-seryl-[protein] + ATP = O-phospho-L-seryl-[protein] + ADP + H(+). It catalyses the reaction L-threonyl-[protein] + ATP = O-phospho-L-threonyl-[protein] + ADP + H(+). In terms of biological role, involved in the control of sexual development and cell growth under stressed conditions. Phosphorylates AGC kinase gad8 at 'Thr-387', activating gad8 kinase activity and promoting sexual development. Phosphorylates AGC kinase psk1 at 'Ser-248', activating psk1 kinase activity and promoting phosphorylation of ribosomal protein S6. The chain is Serine/threonine-protein kinase ksg1 from Schizosaccharomyces pombe (strain 972 / ATCC 24843) (Fission yeast).